We begin with the raw amino-acid sequence, 164 residues long: Probable calcium-binding protein CML17 (164 aa).

EF-hand domains follow at residues 4–39, 40–75, 88–123, and 126–161; these read DQQAELRRVFELFDRDGDGRITREELTESLERLGMP, VHREELAATIARIDANGDGCVDMDEFTQLYETVMRV, VDEASMREAFDVFDRNGDGFITVDELGAVLASLGIK, and RTAEDCGRMIGQVDRDGDGRVDFLEFKQMMRGGAFA. Asp17, Asp19, Asp21, Arg23, Glu28, Asp53, Asn55, Asp57, Cys59, Glu64, Asp101, Asn103, Asp105, Glu112, Asp139, Asp141, Asp143, Arg145, and Glu150 together coordinate Ca(2+).

Potential calcium sensor. The protein is Probable calcium-binding protein CML17 (CML17) of Oryza sativa subsp. japonica (Rice).